Consider the following 396-residue polypeptide: MKKLVILGSTGSIGKSTLSVVEQNKTEYEVFGLVGGKNVELMAAQCLLFQPKFAALDDENAAKALEEQLRQLNVKTEVLSGQKAICELSAHPEVDMVMAAIVGAAGLLPTLSAVKAGKKVLLANKESLVTCGQIFIDEARKSGAQLLPVDSEHNAIFQSLPPDAQQKVGFCPLAELGVSKIILTGSGGPFRVKPLDEFAAITPAQAVAHPNWSMGKKISVDSATMMNKGLEYIEARWLFNASAEEMEIIIHPQSIIHSMVRYIDGSVIAQMGNPDMCTPIAHTMAYPKRINAGVAPLDFFKLKELTFIEPDFARYPNLKLAIDAFAEGQYATTAMNAANEVAVEAFLNERIRFIDIVNVNRTVVENIAPVQVKEIADVLHIDKLARELAEQAVINL.

Residues Thr10, Gly11, Ser12, Ile13, Gly36, Lys37, Asn38, and Asn124 each coordinate NADPH. A 1-deoxy-D-xylulose 5-phosphate-binding site is contributed by Lys125. Glu126 serves as a coordination point for NADPH. Residue Asp150 participates in Mn(2+) binding. 4 residues coordinate 1-deoxy-D-xylulose 5-phosphate: Ser151, Glu152, Ser186, and His209. Glu152 is a binding site for Mn(2+). Residue Gly215 participates in NADPH binding. Residues Ser222, Asn227, Lys228, and Glu231 each contribute to the 1-deoxy-D-xylulose 5-phosphate site. Mn(2+) is bound at residue Glu231.

It belongs to the DXR family. Requires Mg(2+) as cofactor. Mn(2+) is required as a cofactor.

It carries out the reaction 2-C-methyl-D-erythritol 4-phosphate + NADP(+) = 1-deoxy-D-xylulose 5-phosphate + NADPH + H(+). It functions in the pathway isoprenoid biosynthesis; isopentenyl diphosphate biosynthesis via DXP pathway; isopentenyl diphosphate from 1-deoxy-D-xylulose 5-phosphate: step 1/6. Catalyzes the NADPH-dependent rearrangement and reduction of 1-deoxy-D-xylulose-5-phosphate (DXP) to 2-C-methyl-D-erythritol 4-phosphate (MEP). This chain is 1-deoxy-D-xylulose 5-phosphate reductoisomerase, found in Actinobacillus pleuropneumoniae serotype 5b (strain L20).